A 473-amino-acid chain; its full sequence is Ribulose bisphosphate carboxylase large chain 2 (473 aa).

Substrate is bound by residues Asn116 and Thr166. Lys168 serves as the catalytic Proton acceptor. Substrate is bound at residue Lys170. Lys194, Asp196, and Glu197 together coordinate Mg(2+). Lys194 carries the post-translational modification N6-carboxylysine. The active-site Proton acceptor is His287. Residues Arg288, His320, and Ser372 each coordinate substrate.

The protein belongs to the RuBisCO large chain family. Type I subfamily. Heterohexadecamer of 8 large chains and 8 small chains. The cofactor is Mg(2+).

The catalysed reaction is 2 (2R)-3-phosphoglycerate + 2 H(+) = D-ribulose 1,5-bisphosphate + CO2 + H2O. It catalyses the reaction D-ribulose 1,5-bisphosphate + O2 = 2-phosphoglycolate + (2R)-3-phosphoglycerate + 2 H(+). In terms of biological role, ruBisCO catalyzes two reactions: the carboxylation of D-ribulose 1,5-bisphosphate, the primary event in carbon dioxide fixation, as well as the oxidative fragmentation of the pentose substrate. Both reactions occur simultaneously and in competition at the same active site. This chain is Ribulose bisphosphate carboxylase large chain 2, found in Cereibacter sphaeroides (strain ATCC 17025 / ATH 2.4.3) (Rhodobacter sphaeroides).